We begin with the raw amino-acid sequence, 497 residues long: Ethanolamine-phosphate phospho-lyase (497 aa).

At Lys278 the chain carries N6-(pyridoxal phosphate)lysine. Positions 440–497 (TGAETESGISKNTPCRTKMPKEAQSELLRDSSLESRENPSQKRNGLCTDSLLSKRLRT) are disordered. The span at 458 to 479 (MPKEAQSELLRDSSLESRENPS) shows a compositional bias: basic and acidic residues.

This sequence belongs to the class-III pyridoxal-phosphate-dependent aminotransferase family. As to quaternary structure, homotetramer. Requires pyridoxal 5'-phosphate as cofactor.

Its subcellular location is the mitochondrion. It carries out the reaction phosphoethanolamine + H2O = acetaldehyde + NH4(+) + phosphate. Its function is as follows. Catalyzes the pyridoxal-phosphate-dependent breakdown of phosphoethanolamine, converting it to ammonia, inorganic phosphate and acetaldehyde. This is Ethanolamine-phosphate phospho-lyase (ETNPPL) from Bos taurus (Bovine).